A 260-amino-acid polypeptide reads, in one-letter code: Flap endonuclease Xni (260 aa).

A Mg(2+)-binding site is contributed by Asp112. The 91-residue stretch at 168–258 (LQPSQLVDFW…FNLKDLRYTP (91 aa)) folds into the 5'-3' exonuclease domain. K(+) is bound by residues Leu179, Val190, and Ile193. The segment at 192–197 (GIGEKT) is interaction with DNA.

This sequence belongs to the Xni family. The cofactor is Mg(2+). K(+) is required as a cofactor.

Has flap endonuclease activity. During DNA replication, flap endonucleases cleave the 5'-overhanging flap structure that is generated by displacement synthesis when DNA polymerase encounters the 5'-end of a downstream Okazaki fragment. This Tolumonas auensis (strain DSM 9187 / NBRC 110442 / TA 4) protein is Flap endonuclease Xni.